A 759-amino-acid polypeptide reads, in one-letter code: Nucleolar RNA helicase 2-A (759 aa).

The interval 1 to 154 is disordered; that stretch reads MPVKVYAEEM…KKRKTDTTEI (154 aa). Acidic residues predominate over residues 77 to 86; sequence ETAEECDGEQ. A Q motif motif is present at residues 179–207; it reads GDFSKFPLSKETIKNLQAKGVSYLFPIQS. The region spanning 210–389 is the Helicase ATP-binding domain; that stretch reads FHTAYSGKDV…KKYMRKQFEK (180 aa). 223–230 provides a ligand contact to ATP; sequence ARTGTGKT. The DEAD box motif lies at 332–335; the sequence is DEVD. In terms of domain architecture, Helicase C-terminal spans 422–566; it reads DLVQVYSGSH…VGVPSLLNVA (145 aa). The interval 709-759 is disordered; sequence QESERNFDGPRNRGFGGRGRRPFDRRNNSRNSNRGGGGRGRNRNGGFRRGR. The span at 710-719 shows a compositional bias: basic and acidic residues; that stretch reads ESERNFDGPR. A compositionally biased stretch (basic residues) spans 748 to 759; the sequence is GRNRNGGFRRGR.

It belongs to the DEAD box helicase family. DDX21/DDX50 subfamily. Widely expressed. Expressed at higher level in stomach. Expressed at higher level compared to ddx21-b.

Its subcellular location is the nucleus. It is found in the nucleolus. It localises to the nucleoplasm. The protein resides in the cytoplasm. The protein localises to the cytosol. Its subcellular location is the mitochondrion. The catalysed reaction is ATP + H2O = ADP + phosphate + H(+). Functionally, RNA helicase that acts as a sensor of the transcriptional status of both RNA polymerase (Pol) I and II: promotes ribosomal RNA (rRNA) processing and transcription from polymerase II (Pol II). Binds various RNAs, such as rRNAs, snoRNAs, 7SK and, at lower extent, mRNAs. In the nucleolus, localizes to rDNA locus, where it directly binds rRNAs and snoRNAs, and promotes rRNA transcription, processing and modification. Required for rRNA 2'-O-methylation, possibly by promoting the recruitment of late-acting snoRNAs SNORD56 and SNORD58 with pre-ribosomal complexes. In the nucleoplasm, binds 7SK RNA and is recruited to the promoters of Pol II-transcribed genes: acts by facilitating the release of P-TEFb from inhibitory 7SK snRNP in a manner that is dependent on its helicase activity, thereby promoting transcription of its target genes. Required to prevent R-loop-associated DNA damage and transcription-associated genomic instability. The protein is Nucleolar RNA helicase 2-A (ddx21-a) of Xenopus laevis (African clawed frog).